A 613-amino-acid chain; its full sequence is Na(+)/H(+) antiporter NhaA 1 (613 aa).

The segment at 1–23 is disordered; it reads MTEASARTIGPLPSRFSRDPKTP. Residues 1-408 form a na(+)/H(+) antiporter NhaA region; it reads MTEASARTIG…DPARQDEARV (408 aa). Transmembrane regions (helical) follow at residues 29–49, 81–101, 110–130, 138–158, 168–188, 191–211, 231–251, 300–320, 337–357, 377–397, and 408–428; these read AAAALLLAFTVLAILWANSPW, GLMAFFFFIVGLEVKSEFVIG, AVPVVAAIAGLIVPAVIFLTF, QAWGVVISTDTAFLVGALAVI, IFLLTLAVVDDVGALGAIALF, DDLKLAPLAVAALLIAALAMV, IALYLAHVHPTLAGVAVAVLI, AVGPYVSFVVLPIFALANAGV, WGIVAGLVVGKFVGITAATAL, GGAALSGIGFTISLFIVDVAI, and VGVLIASVLAFTLSWALFRIT. One can recognise a Thioredoxin domain in the interval 409-613; sequence GVLIASVLAF…SLIRALEAGR (205 aa).

It in the N-terminal section; belongs to the NhaA Na(+)/H(+) (TC 2.A.33) antiporter family.

It is found in the cell membrane. It catalyses the reaction Na(+)(in) + 2 H(+)(out) = Na(+)(out) + 2 H(+)(in). Its function is as follows. Na(+)/H(+) antiporter that extrudes sodium in exchange for external protons. This Mycobacterium sp. (strain KMS) protein is Na(+)/H(+) antiporter NhaA 1.